A 236-amino-acid polypeptide reads, in one-letter code: Phosphoribosylaminoimidazole-succinocarboxamide synthase (236 aa).

Belongs to the SAICAR synthetase family.

The catalysed reaction is 5-amino-1-(5-phospho-D-ribosyl)imidazole-4-carboxylate + L-aspartate + ATP = (2S)-2-[5-amino-1-(5-phospho-beta-D-ribosyl)imidazole-4-carboxamido]succinate + ADP + phosphate + 2 H(+). The protein operates within purine metabolism; IMP biosynthesis via de novo pathway; 5-amino-1-(5-phospho-D-ribosyl)imidazole-4-carboxamide from 5-amino-1-(5-phospho-D-ribosyl)imidazole-4-carboxylate: step 1/2. The protein is Phosphoribosylaminoimidazole-succinocarboxamide synthase of Wolinella succinogenes (strain ATCC 29543 / DSM 1740 / CCUG 13145 / JCM 31913 / LMG 7466 / NCTC 11488 / FDC 602W) (Vibrio succinogenes).